The primary structure comprises 333 residues: Testin-2 (333 aa).

Residues 1–17 (MIAVLFLAILCLEIDST) form the signal peptide. 3 cysteine pairs are disulfide-bonded: C135/C178, C169/C211, and C269/C322. Residue N173 is glycosylated (N-linked (GlcNAc...) asparagine). Residues H276 and N300 contribute to the active site.

The protein belongs to the peptidase C1 family. As to expression, expressed in testis and ovary. Low level in spleen, epididymis, kidney, and uterus. Expressed in primary cultures of Sertoli cells.

It localises to the secreted. The protein is Testin-2 of Mus musculus (Mouse).